A 200-amino-acid chain; its full sequence is Probable molybdenum cofactor guanylyltransferase (200 aa).

Residues 9–11, Lys21, Asp69, and Asp100 contribute to the GTP site; that span reads LAG. Residue Asp100 coordinates Mg(2+).

This sequence belongs to the MobA family. It depends on Mg(2+) as a cofactor.

It is found in the cytoplasm. It carries out the reaction Mo-molybdopterin + GTP + H(+) = Mo-molybdopterin guanine dinucleotide + diphosphate. Transfers a GMP moiety from GTP to Mo-molybdopterin (Mo-MPT) cofactor (Moco or molybdenum cofactor) to form Mo-molybdopterin guanine dinucleotide (Mo-MGD) cofactor. The sequence is that of Probable molybdenum cofactor guanylyltransferase from Bacillus cereus (strain G9842).